Consider the following 295-residue polypeptide: Pyridoxal 5'-phosphate synthase subunit PdxS (295 aa).

D-ribose 5-phosphate is bound at residue aspartate 25. Lysine 82 (schiff-base intermediate with D-ribose 5-phosphate) is an active-site residue. Glycine 154 provides a ligand contact to D-ribose 5-phosphate. A D-glyceraldehyde 3-phosphate-binding site is contributed by arginine 166. Residues glycine 215 and 236–237 each bind D-ribose 5-phosphate; that span reads GS.

It belongs to the PdxS/SNZ family. In the presence of PdxT, forms a dodecamer of heterodimers.

It catalyses the reaction aldehydo-D-ribose 5-phosphate + D-glyceraldehyde 3-phosphate + L-glutamine = pyridoxal 5'-phosphate + L-glutamate + phosphate + 3 H2O + H(+). Its pathway is cofactor biosynthesis; pyridoxal 5'-phosphate biosynthesis. In terms of biological role, catalyzes the formation of pyridoxal 5'-phosphate from ribose 5-phosphate (RBP), glyceraldehyde 3-phosphate (G3P) and ammonia. The ammonia is provided by the PdxT subunit. Can also use ribulose 5-phosphate and dihydroxyacetone phosphate as substrates, resulting from enzyme-catalyzed isomerization of RBP and G3P, respectively. In Dictyoglomus turgidum (strain DSM 6724 / Z-1310), this protein is Pyridoxal 5'-phosphate synthase subunit PdxS.